Reading from the N-terminus, the 434-residue chain is Glutamate-1-semialdehyde 2,1-aminomutase 1 (434 aa).

Lys-270 is subject to N6-(pyridoxal phosphate)lysine.

Belongs to the class-III pyridoxal-phosphate-dependent aminotransferase family. HemL subfamily. In terms of assembly, homodimer. Pyridoxal 5'-phosphate is required as a cofactor.

It is found in the cytoplasm. It catalyses the reaction (S)-4-amino-5-oxopentanoate = 5-aminolevulinate. It functions in the pathway porphyrin-containing compound metabolism; protoporphyrin-IX biosynthesis; 5-aminolevulinate from L-glutamyl-tRNA(Glu): step 2/2. The protein is Glutamate-1-semialdehyde 2,1-aminomutase 1 of Bacillus thuringiensis subsp. konkukian (strain 97-27).